The chain runs to 88 residues: Small ribosomal subunit protein bS20 (88 aa).

The disordered stretch occupies residues 1–27 (MANSKSAKKRALQSEKRRQHNASRRSM).

Belongs to the bacterial ribosomal protein bS20 family.

Functionally, binds directly to 16S ribosomal RNA. In Shewanella baltica (strain OS223), this protein is Small ribosomal subunit protein bS20.